The following is a 958-amino-acid chain: Probable protein phosphatase DDB_G0282105 (958 aa).

The next 2 helical transmembrane spans lie at 2–22 (VLMM…SLMV) and 26–46 (FLEF…ILFF). Residues 142–330 (SASQQSELTN…KDKERERSSS (189 aa)) are a coiled coil. The segment covering 312–328 (QEKEKQKLEKDKERERS) has biased composition (basic and acidic residues). 5 disordered regions span residues 312-361 (QEKE…PIPI), 380-421 (SVNG…PKFK), 445-475 (HLGS…TTPI), 491-525 (ITSP…ILSP), and 619-659 (NNNN…NDNK). Low complexity-rich tracts occupy residues 329 to 361 (SSFS…PIPI), 390 to 401 (SSVSPPSSSYLR), 452 to 475 (TPAN…TTPI), 491 to 515 (ITSP…SSSS), and 619 to 655 (NNNN…NNNK). A coiled-coil region spans residues 613–666 (NFLKTNNNNNKNNIEESNNNNNNNNNNNNNNNNNNNNNNNNNKNDNKEVNSKLE). In terms of domain architecture, PPM-type phosphatase spans 675-958 (KIGLRRAKKK…DNVTVIIVKL (284 aa)). Mn(2+) contacts are provided by D722, G723, D905, and D949.

In the C-terminal section; belongs to the PP2C family. The cofactor is Mg(2+). Requires Mn(2+) as cofactor.

Its subcellular location is the membrane. The enzyme catalyses O-phospho-L-seryl-[protein] + H2O = L-seryl-[protein] + phosphate. It carries out the reaction O-phospho-L-threonyl-[protein] + H2O = L-threonyl-[protein] + phosphate. In Dictyostelium discoideum (Social amoeba), this protein is Probable protein phosphatase DDB_G0282105.